Reading from the N-terminus, the 349-residue chain is Paired box protein Pax-4 (349 aa).

The segment at residues 5-131 (GLSSVNQLGG…SSINRVLRAL (127 aa)) is a DNA-binding region (paired). The segment at 8-64 (SVNQLGGLFVNGRPLPLDTRQQIVQLAIRGMRPCDISRSLKVSNGCVSKILGRYYRT) is PAI subdomain. An RED subdomain region spans residues 83–131 (AVVARIAQLKDEYPALFAWEIQHQLCTEGLCTQDKAPSVSSINRVLRAL). A DNA-binding region (homeobox) is located at residues 170–229 (SHRNRTIFSPGQAEALEKEFQRGQYPDSVARGKLAAATSLPEDTVRVWFSNRRAKWRRQE). Residues 278–349 (FCQLCCGTAP…VPSTHCSNWP (72 aa)) form a transcription repression region.

It belongs to the paired homeobox family. In terms of tissue distribution, expressed in early pancreas. Later restricted to beta cells. Undetectable in adult islets.

The protein localises to the nucleus. In terms of biological role, plays an important role in the differentiation and development of pancreatic islet beta cells. Transcriptional repressor that competes with PAX6 in binding to a common element in the glucagon, insulin and somatostatin promoters. The protein is Paired box protein Pax-4 (Pax4) of Mus musculus (Mouse).